The following is a 59-amino-acid chain: MAELKVTQIKSTIGTKQNQRNSLRTLGLKGIRQTVVREDNAQNRGLINVVRHLVTVEEV.

Belongs to the universal ribosomal protein uL30 family. In terms of assembly, part of the 50S ribosomal subunit.

The chain is Large ribosomal subunit protein uL30 from Rhodococcus jostii (strain RHA1).